The following is a 481-amino-acid chain: Docking protein 1 (481 aa).

Met1 bears the N-acetylmethionine mark. A PH domain is found at 4–119 (AVMEGPLFLQ…WVQTLCRNAF (116 aa)). Position 48 is a phosphoserine (Ser48). The region spanning 151–259 (EGSQFWVTVQ…HRQKAQGKAG (109 aa)) is the IRS-type PTB domain. Phosphoserine is present on residues Ser269 and Ser291. Residues 270–293 (HEGEVAEGKLPSPPGPQELLDSPP) form a disordered region. A Phosphotyrosine modification is found at Tyr296. The tract at residues 307–329 (PCPSQDSLYSDPLDSTSAQAGEG) is disordered. Over residues 310–325 (SQDSLYSDPLDSTSAQ) the composition is skewed to polar residues. Residues Tyr337 and Tyr341 each carry the phosphotyrosine modification. Tyr362 carries the post-translational modification Phosphotyrosine; by INSR. Tyr377 bears the Phosphotyrosine mark. Phosphotyrosine; by INSR is present on Tyr398. The tract at residues 404 to 481 (PATDDYAVPP…KTGVKSEGST (78 aa)) is disordered. Tyr409 is modified (phosphotyrosine). A Phosphoserine modification is found at Ser416. Over residues 436–458 (ATGSGIKSHNSALYSQVQKSGAS) the composition is skewed to polar residues. At Tyr449 the chain carries Phosphotyrosine. Ser460 carries the post-translational modification Phosphoserine.

The protein belongs to the DOK family. Type A subfamily. In terms of assembly, interacts with ABL1. Interacts with RasGAP and INPP5D/SHIP1. Interacts directly with phosphorylated ITGB3. Interacts with SRMS (via the SH2 and SH3 domains). Post-translationally, constitutively tyrosine-phosphorylated. Phosphorylated by TEC. Phosphorylated by LYN. Phosphorylated on tyrosine residues by the insulin receptor kinase. Results in the negative regulation of the insulin signaling pathway. Phosphorylated on tyrosine residues by SRMS. As to expression, expressed in pancreas, heart, leukocyte and spleen. Expressed in both resting and activated peripheral blood T-cells. Expressed in breast cancer.

The protein resides in the cytoplasm. Its subcellular location is the nucleus. It localises to the perinuclear region. Functionally, DOK proteins are enzymatically inert adaptor or scaffolding proteins. They provide a docking platform for the assembly of multimolecular signaling complexes. DOK1 appears to be a negative regulator of the insulin signaling pathway. Modulates integrin activation by competing with talin for the same binding site on ITGB3. This Homo sapiens (Human) protein is Docking protein 1 (DOK1).